The primary structure comprises 453 residues: Sensor histidine kinase CpxA (453 aa).

Residues 1-4 (MTAR) are Cytoplasmic-facing. The chain crosses the membrane as a helical span at residues 5–25 (IFAIFWLTLALVLMLVLMLPK). Residues 26 to 159 (LDSRQMTELL…SDFINLLFDR (134 aa)) lie on the Periplasmic side of the membrane. A helical transmembrane segment spans residues 160–180 (PLLLLIVTMLVSAPLLLWLAW). The HAMP domain maps to 180 to 233 (WSLAKPARKLKNAADEVAQGNLRQHPELEAGPQEFLAAGASFNQMVTALERMMT). The Cytoplasmic segment spans residues 181–453 (SLAKPARKLK…TIWLPLYKRT (273 aa)). In terms of domain architecture, Histidine kinase spans 241–451 (DISHELRTPL…RLTIWLPLYK (211 aa)). The active-site Nucleophile is the histidine 244. Histidine 244 carries the phosphohistidine; by autocatalysis modification. Residues 244 to 247 (HELR), 355 to 360 (RNALRY), aspartate 382, 401 to 402 (RT), and 412 to 417 (GTGLGL) each bind ATP.

Interacts with cognate response regulator CpxR.

It localises to the cell inner membrane. It carries out the reaction ATP + protein L-histidine = ADP + protein N-phospho-L-histidine.. Its activity is regulated as follows. The two-component system is activated by envelope stress such as overexpression of some (misfolded) periplasmic proteins. Functionally, histidine kinase member of the two-component regulatory system CpxA/CpxR which responds to envelope stress response by activating or, in some cases, repressing expression of downstream genes. Activates CpxR by phosphorylation. The chain is Sensor histidine kinase CpxA from Klebsiella pneumoniae subsp. pneumoniae (strain HS11286).